The sequence spans 83 residues: ATP synthase subunit c, chloroplastic (83 aa).

The next 2 membrane-spanning stretches (helical) occupy residues 3 to 23 (PLIAASSVIAAGLAIGLAAIG) and 57 to 77 (FAFMESLTIYGLVVALALLFA).

It belongs to the ATPase C chain family. F-type ATPases have 2 components, F(1) - the catalytic core - and F(0) - the membrane proton channel. F(1) has five subunits: alpha(3), beta(3), gamma(1), delta(1), epsilon(1). F(0) has four main subunits: a(1), b(1), b'(1) and c(10-14). The alpha and beta chains form an alternating ring which encloses part of the gamma chain. F(1) is attached to F(0) by a central stalk formed by the gamma and epsilon chains, while a peripheral stalk is formed by the delta, b and b' chains.

It localises to the plastid. Its subcellular location is the chloroplast thylakoid membrane. In terms of biological role, f(1)F(0) ATP synthase produces ATP from ADP in the presence of a proton or sodium gradient. F-type ATPases consist of two structural domains, F(1) containing the extramembraneous catalytic core and F(0) containing the membrane proton channel, linked together by a central stalk and a peripheral stalk. During catalysis, ATP synthesis in the catalytic domain of F(1) is coupled via a rotary mechanism of the central stalk subunits to proton translocation. Functionally, key component of the F(0) channel; it plays a direct role in translocation across the membrane. A homomeric c-ring of between 10-14 subunits forms the central stalk rotor element with the F(1) delta and epsilon subunits. This is ATP synthase subunit c, chloroplastic from Oedogonium cardiacum (Filamentous green alga).